We begin with the raw amino-acid sequence, 142 residues long: Peptide methionine sulfoxide reductase MsrB (142 aa).

One can recognise a MsrB domain in the interval isoleucine 2–tyrosine 125. Cysteine 114 functions as the Nucleophile in the catalytic mechanism.

This sequence belongs to the MsrB Met sulfoxide reductase family.

It carries out the reaction L-methionyl-[protein] + [thioredoxin]-disulfide + H2O = L-methionyl-(R)-S-oxide-[protein] + [thioredoxin]-dithiol. This Staphylococcus haemolyticus (strain JCSC1435) protein is Peptide methionine sulfoxide reductase MsrB.